The primary structure comprises 574 residues: Putative ABC transporter ATP-binding protein VV2_1533 (574 aa).

2 ABC transporter domains span residues 3–244 (IEFS…GIRE) and 299–533 (LDVR…ANLT). Residues 37 to 44 (GPSGSGKS) and 332 to 339 (GKNGSGKS) each bind ATP.

It belongs to the ABC transporter superfamily.

The protein localises to the cell inner membrane. In terms of biological role, probably part of an ABC transporter complex. Responsible for energy coupling to the transport system. The chain is Putative ABC transporter ATP-binding protein VV2_1533 from Vibrio vulnificus (strain CMCP6).